The primary structure comprises 511 residues: MSVELWQQCVELLRDELPAQQFNTWIRPLQVEAEGDELRVYAPNRFVLDWVNEKYLGRLLELLGEHGQGMAPALSLLIGSKRSSAPRAAPNAPLAAAASQALSANSVSSVSSSAPAMATPAAAVAVPAPVQNVAAHDEPSRDSFDPMAGASSQQAPARAEQRTVQVEGALKHTSYLNRTFTFENFVEGKSNQLARAAAWQVADNPKHGYNPLFLYGGVGLGKTHLMHAVGNHLLKKNPNAKVVYLHSERFVADMVKALQLNAINEFKRFYRSVDALLIDDIQFFARKERSQEEFFHTFNALLEGGQQVILTSDRYPKEIEGLEERLKSRFGWGLTVAVEPPELETRVAILMKKADQAKVDLPHDAAFFIAQRIRSNVRELEGALKRVIAHSHFMGRDITIELIRESLKDLLALQDKLVSVDNIQRTVAEYYKIKISDLLSKRRSRSVARPRQVAMALSKELTNHSLPEIGDVFGGRDHTTVLHACRKINELKESDADIREDYKNLLRTLTT.

Residues 1–90 form a domain I, interacts with DnaA modulators region; sequence MSVELWQQCV…KRSSAPRAAP (90 aa). The segment at 91 to 174 is domain II; sequence NAPLAAAASQ…QVEGALKHTS (84 aa). The disordered stretch occupies residues 133-162; the sequence is VAAHDEPSRDSFDPMAGASSQQAPARAEQR. Positions 135 to 144 are enriched in basic and acidic residues; the sequence is AHDEPSRDSF. The domain III, AAA+ region stretch occupies residues 175–391; it reads YLNRTFTFEN…GALKRVIAHS (217 aa). ATP-binding residues include Gly219, Gly221, Lys222, and Thr223. A domain IV, binds dsDNA region spans residues 392-511; that stretch reads HFMGRDITIE…YKNLLRTLTT (120 aa).

Belongs to the DnaA family. As to quaternary structure, oligomerizes as a right-handed, spiral filament on DNA at oriC.

It is found in the cytoplasm. Plays an essential role in the initiation and regulation of chromosomal replication. ATP-DnaA binds to the origin of replication (oriC) to initiate formation of the DNA replication initiation complex once per cell cycle. Binds the DnaA box (a 9 base pair repeat at the origin) and separates the double-stranded (ds)DNA. Forms a right-handed helical filament on oriC DNA; dsDNA binds to the exterior of the filament while single-stranded (ss)DNA is stabiized in the filament's interior. The ATP-DnaA-oriC complex binds and stabilizes one strand of the AT-rich DNA unwinding element (DUE), permitting loading of DNA polymerase. After initiation quickly degrades to an ADP-DnaA complex that is not apt for DNA replication. Binds acidic phospholipids. This Pseudomonas savastanoi pv. phaseolicola (strain 1448A / Race 6) (Pseudomonas syringae pv. phaseolicola (strain 1448A / Race 6)) protein is Chromosomal replication initiator protein DnaA.